The chain runs to 154 residues: UPF0127 protein TSIB_1463 (154 aa).

It belongs to the UPF0127 family.

The protein is UPF0127 protein TSIB_1463 of Thermococcus sibiricus (strain DSM 12597 / MM 739).